Here is a 475-residue protein sequence, read N- to C-terminus: Aspartyl/glutamyl-tRNA(Asn/Gln) amidotransferase subunit B (475 aa).

This sequence belongs to the GatB/GatE family. GatB subfamily. In terms of assembly, heterotrimer of A, B and C subunits.

It carries out the reaction L-glutamyl-tRNA(Gln) + L-glutamine + ATP + H2O = L-glutaminyl-tRNA(Gln) + L-glutamate + ADP + phosphate + H(+). The enzyme catalyses L-aspartyl-tRNA(Asn) + L-glutamine + ATP + H2O = L-asparaginyl-tRNA(Asn) + L-glutamate + ADP + phosphate + 2 H(+). Functionally, allows the formation of correctly charged Asn-tRNA(Asn) or Gln-tRNA(Gln) through the transamidation of misacylated Asp-tRNA(Asn) or Glu-tRNA(Gln) in organisms which lack either or both of asparaginyl-tRNA or glutaminyl-tRNA synthetases. The reaction takes place in the presence of glutamine and ATP through an activated phospho-Asp-tRNA(Asn) or phospho-Glu-tRNA(Gln). This is Aspartyl/glutamyl-tRNA(Asn/Gln) amidotransferase subunit B from Chlorobium chlorochromatii (strain CaD3).